A 108-amino-acid chain; its full sequence is Large ribosomal subunit protein uL24 (108 aa).

It belongs to the universal ribosomal protein uL24 family. As to quaternary structure, part of the 50S ribosomal subunit.

In terms of biological role, one of two assembly initiator proteins, it binds directly to the 5'-end of the 23S rRNA, where it nucleates assembly of the 50S subunit. Its function is as follows. One of the proteins that surrounds the polypeptide exit tunnel on the outside of the subunit. This chain is Large ribosomal subunit protein uL24, found in Mycoplasmopsis synoviae (strain 53) (Mycoplasma synoviae).